Reading from the N-terminus, the 316-residue chain is MAKAARRTKSAPARRSPRRHARQTGATIRRPKRPIKSNETIALPKWLGFLSHPLLKQMAKRLLLILVIVGFLAGLWAARWPQLLATKTGEYLGRQGFSVRHVEIVGLHHMDRQAIYDIASTQQNLAMPLVDLNAIRDRLLRFGWIEDARVSRRWPDTLVVDIVERNPAAVWQYHGHLRLVDNNGIIISDVDPHASPDLPLVIGAGANLHLEDLGHLLEAAPSLKPMIDAASWIGNRRWDLHFASGETLSLPEGNEAEAALVRFSHINREHHLLERGYVKFDMRVPGAPITARISPEPVKKATKPAKAADPLVSDRI.

The disordered stretch occupies residues 1–34 (MAKAARRTKSAPARRSPRRHARQTGATIRRPKRP). Topologically, residues 1–61 (MAKAARRTKS…HPLLKQMAKR (61 aa)) are cytoplasmic. A helical transmembrane segment spans residues 62–80 (LLLILVIVGFLAGLWAARW). Residues 81-316 (PQLLATKTGE…AADPLVSDRI (236 aa)) lie on the Periplasmic side of the membrane. The POTRA domain occupies 97–165 (FSVRHVEIVG…DTLVVDIVER (69 aa)). Residues 295–316 (PEPVKKATKPAKAADPLVSDRI) are disordered.

The protein belongs to the FtsQ/DivIB family. FtsQ subfamily.

The protein localises to the cell inner membrane. Its function is as follows. Essential cell division protein. The sequence is that of Cell division protein FtsQ from Zymomonas mobilis subsp. mobilis (strain ATCC 31821 / ZM4 / CP4).